The chain runs to 194 residues: Outer-membrane lipoprotein LolB (194 aa).

The first 18 residues, 1–18, serve as a signal peptide directing secretion; that stretch reads MKLLQHLTLIFCLLILTA. The N-palmitoyl cysteine moiety is linked to residue cysteine 19. The S-diacylglycerol cysteine moiety is linked to residue cysteine 19.

Belongs to the LolB family. In terms of assembly, monomer.

It is found in the cell outer membrane. In terms of biological role, plays a critical role in the incorporation of lipoproteins in the outer membrane after they are released by the LolA protein. The sequence is that of Outer-membrane lipoprotein LolB from Tolumonas auensis (strain DSM 9187 / NBRC 110442 / TA 4).